The following is a 520-amino-acid chain: Cytochrome P450 84A1 (520 aa).

Met-1 carries the post-translational modification N-acetylmethionine. Residues 12-32 (LSDPTTSLVIVVSLFIFISFI) form a helical membrane-spanning segment. Residue Cys-458 participates in heme binding.

It belongs to the cytochrome P450 family. Heme is required as a cofactor.

It localises to the membrane. The protein operates within aromatic compound metabolism; phenylpropanoid biosynthesis. This is Cytochrome P450 84A1 (CYP84A1) from Arabidopsis thaliana (Mouse-ear cress).